The sequence spans 55 residues: ATP synthase F(0) complex subunit 8 (55 aa).

A helical transmembrane segment spans residues 4-24 (LNPAPWFTILVFSWMIFLAII). A compositionally biased stretch (polar residues) spans 32-41 (TSPNDSSPLS). Residues 32–55 (TSPNDSSPLSTEKHKTESWDWPWQ) are disordered.

It belongs to the ATPase protein 8 family. In terms of assembly, component of the ATP synthase complex composed at least of ATP5F1A/subunit alpha, ATP5F1B/subunit beta, ATP5MC1/subunit c (homooctomer), MT-ATP6/subunit a, MT-ATP8/subunit 8, ATP5ME/subunit e, ATP5MF/subunit f, ATP5MG/subunit g, ATP5MK/subunit k, ATP5MJ/subunit j, ATP5F1C/subunit gamma, ATP5F1D/subunit delta, ATP5F1E/subunit epsilon, ATP5PF/subunit F6, ATP5PB/subunit b, ATP5PD/subunit d, ATP5PO/subunit OSCP. ATP synthase complex consists of a soluble F(1) head domain (subunits alpha(3) and beta(3)) - the catalytic core - and a membrane F(0) domain - the membrane proton channel (subunits c, a, 8, e, f, g, k and j). These two domains are linked by a central stalk (subunits gamma, delta, and epsilon) rotating inside the F1 region and a stationary peripheral stalk (subunits F6, b, d, and OSCP).

It is found in the mitochondrion membrane. Its function is as follows. Subunit 8, of the mitochondrial membrane ATP synthase complex (F(1)F(0) ATP synthase or Complex V) that produces ATP from ADP in the presence of a proton gradient across the membrane which is generated by electron transport complexes of the respiratory chain. ATP synthase complex consist of a soluble F(1) head domain - the catalytic core - and a membrane F(1) domain - the membrane proton channel. These two domains are linked by a central stalk rotating inside the F(1) region and a stationary peripheral stalk. During catalysis, ATP synthesis in the catalytic domain of F(1) is coupled via a rotary mechanism of the central stalk subunits to proton translocation. In vivo, can only synthesize ATP although its ATP hydrolase activity can be activated artificially in vitro. Part of the complex F(0) domain. This Formosania lacustris (Oriental stream loach) protein is ATP synthase F(0) complex subunit 8.